A 388-amino-acid chain; its full sequence is Formate-dependent phosphoribosylglycinamide formyltransferase (388 aa).

N(1)-(5-phospho-beta-D-ribosyl)glycinamide is bound by residues 15–16 and glutamate 75; that span reads EL. ATP contacts are provided by residues arginine 107, lysine 148, 153 to 158, 188 to 191, and glutamate 196; these read SSGKGQ and EEFL. In terms of domain architecture, ATP-grasp spans 112-302; the sequence is DLASAELALL…EFELHLRAVL (191 aa). Residues glutamate 261 and glutamate 273 each coordinate Mg(2+). N(1)-(5-phospho-beta-D-ribosyl)glycinamide contacts are provided by residues aspartate 280, lysine 350, and 357-358; that span reads RR.

It belongs to the PurK/PurT family. Homodimer.

The catalysed reaction is N(1)-(5-phospho-beta-D-ribosyl)glycinamide + formate + ATP = N(2)-formyl-N(1)-(5-phospho-beta-D-ribosyl)glycinamide + ADP + phosphate + H(+). It functions in the pathway purine metabolism; IMP biosynthesis via de novo pathway; N(2)-formyl-N(1)-(5-phospho-D-ribosyl)glycinamide from N(1)-(5-phospho-D-ribosyl)glycinamide (formate route): step 1/1. Functionally, involved in the de novo purine biosynthesis. Catalyzes the transfer of formate to 5-phospho-ribosyl-glycinamide (GAR), producing 5-phospho-ribosyl-N-formylglycinamide (FGAR). Formate is provided by PurU via hydrolysis of 10-formyl-tetrahydrofolate. The protein is Formate-dependent phosphoribosylglycinamide formyltransferase of Prochlorococcus marinus (strain MIT 9313).